Consider the following 313-residue polypeptide: Phosphoenolpyruvate phosphomutase (313 aa).

Aspartate 69 acts as the Nucleophile in catalysis.

This sequence belongs to the isocitrate lyase/PEP mutase superfamily. PEP mutase family.

It catalyses the reaction phosphoenolpyruvate + H(+) = 3-phosphonopyruvate. Its pathway is secondary metabolite biosynthesis; bialaphos biosynthesis. Functionally, formation of a carbon-phosphorus bond by converting phosphoenolpyruvate (PEP) to phosphonopyruvate (P-Pyr). The sequence is that of Phosphoenolpyruvate phosphomutase (bcpB) from Streptomyces hygroscopicus.